The primary structure comprises 629 residues: Polygalacturonase non-catalytic subunit AroGP2 (629 aa).

A signal peptide spans 1–27 (MHNKILVSSYILLVLLFSLSSFNIVVA). Residues 28 to 109 (KDGDESGNPF…MCAPDLLPSL (82 aa)) constitute a propeptide that is removed on maturation. Residues N125, N143, N255, N277, N333, N368, and N386 are each glycosylated (N-linked (GlcNAc...) asparagine). Positions 267–293 (YGQNANGENQNFTSYSTNGNNPQNNFK) are enriched in polar residues. A disordered region spans residues 267–305 (YGQNANGENQNFTSYSTNGNNPQNNFKNYGVGGNGPSET). In terms of domain architecture, BURP spans 414–628 (FFREKMLKSG…FENDMTWATA (215 aa)).

Interacts with polygalacturonase to form heterodimers.

It localises to the secreted. The protein localises to the extracellular space. Its subcellular location is the apoplast. It is found in the cell wall. In terms of biological role, non-catalytic subunit of polygalacturonase. This Solanum lycopersicum (Tomato) protein is Polygalacturonase non-catalytic subunit AroGP2 (GP2).